The sequence spans 308 residues: MQIYPLRLLPNKIDFDFMNFKKVSYTFSIILSLISFIWIGIYKFNFGIDFAGGIVIEVRLDQAPDLPKMRGVLGKLGIGEVVLQNFGSERDLSIRFGSNSEENLMKNIELIKGSLQSNFPYKFEYRKVDFVGPQVGRQLIEAGAMAMLFSFLAIMVYIWVRFEWYFGFGILIALVHDVILALGFMSMTKLDFNLSTIAAVLTIIGYSVNDSVVIYDRIRENLRKYHKKNITEIINLSINETLSRTILTVITTLLANLALILFGGEAIRSFSILVFFGIIVGTYSSIFISAPILTMFVNRKFNKKVIER.

A run of 6 helical transmembrane segments spans residues 28–48 (SIIL…NFGI), 140–160 (IEAG…YIWV), 164–184 (WYFG…ALGF), 194–214 (LSTI…SVVI), 246–266 (ILTV…GGEA), and 272–292 (ILVF…SAPI).

Belongs to the SecD/SecF family. SecF subfamily. In terms of assembly, forms a complex with SecD. Part of the essential Sec protein translocation apparatus which comprises SecA, SecYEG and auxiliary proteins SecDF-YajC and YidC.

The protein resides in the cell inner membrane. Its function is as follows. Part of the Sec protein translocase complex. Interacts with the SecYEG preprotein conducting channel. SecDF uses the proton motive force (PMF) to complete protein translocation after the ATP-dependent function of SecA. This is Protein translocase subunit SecF from Rickettsia rickettsii (strain Sheila Smith).